A 146-amino-acid polypeptide reads, in one-letter code: Small ribosomal subunit protein uS5 (146 aa).

Residues 8–71 (FEESIVNIGR…DNAFKNLSKV (64 aa)) enclose the S5 DRBM domain.

Belongs to the universal ribosomal protein uS5 family. As to quaternary structure, part of the 30S ribosomal subunit. Contacts proteins S4 and S8.

With S4 and S12 plays an important role in translational accuracy. Its function is as follows. Located at the back of the 30S subunit body where it stabilizes the conformation of the head with respect to the body. This Sulfurimonas denitrificans (strain ATCC 33889 / DSM 1251) (Thiomicrospira denitrificans (strain ATCC 33889 / DSM 1251)) protein is Small ribosomal subunit protein uS5.